The sequence spans 286 residues: Probable syntaxin-7B (286 aa).

At 1-257 (MTDRQPLISK…YVYKSSYRKK (257 aa)) the chain is on the cytoplasmic side. A compositionally biased stretch (basic and acidic residues) spans 97–107 (LSTSNKKESSH). The tract at residues 97-160 (LSTSNKKESS…TNNNNNNNNN (64 aa)) is disordered. The segment covering 114–160 (QQQQQQQNNGNSNNNGYNTRGGYNQQQQQQQQQYNDYTNNNNNNNNN) has biased composition (low complexity). Residues 185 to 247 (NRILDERNAN…EDAVVELEKA (63 aa)) enclose the t-SNARE coiled-coil homology domain. The helical; Anchor for type IV membrane protein transmembrane segment at 258-278 (MIIFVICLLVTLVAVGIFLAI) threads the bilayer. Topologically, residues 279-286 (YYGVIKKK) are vesicular.

The protein belongs to the syntaxin family.

The protein resides in the membrane. In Dictyostelium discoideum (Social amoeba), this protein is Probable syntaxin-7B (syn7B).